The following is a 299-amino-acid chain: Acetylglutamate kinase (299 aa).

Substrate contacts are provided by residues 62–63 (GG), Arg-84, and Asn-188.

Belongs to the acetylglutamate kinase family. ArgB subfamily.

It localises to the cytoplasm. The catalysed reaction is N-acetyl-L-glutamate + ATP = N-acetyl-L-glutamyl 5-phosphate + ADP. It functions in the pathway amino-acid biosynthesis; L-arginine biosynthesis; N(2)-acetyl-L-ornithine from L-glutamate: step 2/4. Functionally, catalyzes the ATP-dependent phosphorylation of N-acetyl-L-glutamate. The polypeptide is Acetylglutamate kinase (Methanosarcina acetivorans (strain ATCC 35395 / DSM 2834 / JCM 12185 / C2A)).